The chain runs to 238 residues: Ribonuclease PH (238 aa).

Phosphate contacts are provided by residues R86 and 124–126 (GTR).

This sequence belongs to the RNase PH family. In terms of assembly, homohexameric ring arranged as a trimer of dimers.

It carries out the reaction tRNA(n+1) + phosphate = tRNA(n) + a ribonucleoside 5'-diphosphate. Its function is as follows. Phosphorolytic 3'-5' exoribonuclease that plays an important role in tRNA 3'-end maturation. Removes nucleotide residues following the 3'-CCA terminus of tRNAs; can also add nucleotides to the ends of RNA molecules by using nucleoside diphosphates as substrates, but this may not be physiologically important. Probably plays a role in initiation of 16S rRNA degradation (leading to ribosome degradation) during starvation. The sequence is that of Ribonuclease PH from Edwardsiella ictaluri (strain 93-146).